The primary structure comprises 294 residues: MAGTRLLIVTGLSGAGKTQAVRCLEDLGFFCVDNLPPKLIPKFAELCAQTTGKIERIALVVDIRGGEFFATVLDVLKDLKNQGLRYEILYLEASNETLVRRFKESRRPHPLSTSGEIVEGIEAERLALRELRGLAHKIIDTSNFSVAQLKQEIANLYGGNEDRERLAITAVSFGYKYGIPLDADLVIDVRFLPNPHYEPQLQPLTGLDEPVREYVFEAPTTSEFLSHLVNLFDFLIPQYIREGKTTLTLAIGCTGGKHRSVVLADWLGEQLRERKHRIVVRHRDLGRDVSGTNY.

ATP is bound at residue 11 to 18 (GLSGAGKT). 62-65 (DIRG) is a binding site for GTP.

Belongs to the RapZ-like family.

In terms of biological role, displays ATPase and GTPase activities. The protein is Nucleotide-binding protein Daud_0300 of Desulforudis audaxviator (strain MP104C).